We begin with the raw amino-acid sequence, 484 residues long: UDP-N-acetylmuramoyl-L-alanyl-D-glutamate--L-lysine ligase (484 aa).

Ser43 provides a ligand contact to UDP-N-acetyl-alpha-D-muramoyl-L-alanyl-D-glutamate. 119–125 (GTKGKTT) contacts ATP. Residues 161 to 162 (TT), Ser188, and Arg196 contribute to the UDP-N-acetyl-alpha-D-muramoyl-L-alanyl-D-glutamate site. Lys230 is modified (N6-carboxylysine). Positions 405 to 408 (DDPN) match the L-lysine recognition motif motif.

Belongs to the MurCDEF family. MurE subfamily. Carboxylation is probably crucial for Mg(2+) binding and, consequently, for the gamma-phosphate positioning of ATP.

The protein localises to the cytoplasm. It catalyses the reaction UDP-N-acetyl-alpha-D-muramoyl-L-alanyl-D-glutamate + L-lysine + ATP = UDP-N-acetyl-alpha-D-muramoyl-L-alanyl-gamma-D-glutamyl-L-lysine + ADP + phosphate + H(+). It functions in the pathway cell wall biogenesis; peptidoglycan biosynthesis. Catalyzes the addition of L-lysine to the nucleotide precursor UDP-N-acetylmuramoyl-L-alanyl-D-glutamate (UMAG) in the biosynthesis of bacterial cell-wall peptidoglycan. The chain is UDP-N-acetylmuramoyl-L-alanyl-D-glutamate--L-lysine ligase from Streptococcus agalactiae serotype III (strain NEM316).